Reading from the N-terminus, the 505-residue chain is Endoglucanase 5 (505 aa).

Residues Met-1–Ser-31 form the signal peptide. Positions Ala-32–Leu-334 are catalytic. Substrate-binding positions include His-64, Trp-68–Phe-69, Tyr-95, and His-130. Glu-168 (proton donor) is an active-site residue. Tyr-230 contacts substrate. The active-site Nucleophile is the Glu-256. Substrate contacts are provided by residues Ala-262–Ser-263, Trp-290, and Lys-295–Glu-297. The disordered stretch occupies residues Ala-332–Gly-355. The segment at Gly-335–Gly-352 is linker. The span at Thr-339–Gly-355 shows a compositional bias: low complexity. Positions Thr-353–Pro-505 constitute a CBM3 domain.

This sequence belongs to the glycosyl hydrolase 5 (cellulase A) family.

It is found in the secreted. It carries out the reaction Endohydrolysis of (1-&gt;4)-beta-D-glucosidic linkages in cellulose, lichenin and cereal beta-D-glucans.. Its function is as follows. Endoglucanase with some exoglucanase activity. In Pectobacterium carotovorum subsp. carotovorum (Erwinia carotovora subsp. carotovora), this protein is Endoglucanase 5 (celV).